The chain runs to 212 residues: Ribonuclease HII (212 aa).

Positions 28 to 212 (SLIAGIDEVG…KSFAPVRQVF (185 aa)) constitute an RNase H type-2 domain. A divalent metal cation-binding residues include Asp-34, Glu-35, and Asp-127.

Belongs to the RNase HII family. It depends on Mn(2+) as a cofactor. Mg(2+) serves as cofactor.

It is found in the cytoplasm. The catalysed reaction is Endonucleolytic cleavage to 5'-phosphomonoester.. In terms of biological role, endonuclease that specifically degrades the RNA of RNA-DNA hybrids. In Chlamydia abortus (strain DSM 27085 / S26/3) (Chlamydophila abortus), this protein is Ribonuclease HII.